The following is a 645-amino-acid chain: Synaptotagmin-16 (645 aa).

3 disordered regions span residues 102-121 (AQNS…STMS), 144-192 (EHHL…DSDE), and 206-344 (QSFR…PSGV). Residues 167-177 (ETVNGKKQVNS) show a composition bias toward polar residues. Residues 179 to 192 (GDDEELSTSSDSDE) are compositionally biased toward acidic residues. The segment covering 287 to 303 (HQESSVVQSLRRQSTEG) has biased composition (polar residues). In terms of domain architecture, C2 1 spans 350 to 469 (KCGDLDVIFE…HPEGEMKVTL (120 aa)). A disordered region spans residues 478–503 (SSGGSPLSPSAVSHSDSTSSTQSLSH). The span at 485–502 (SPSAVSHSDSTSSTQSLS) shows a compositional bias: low complexity. A C2 2 domain is found at 505 to 640 (GAPELLVGLS…TKGQQICRWH (136 aa)).

Belongs to the synaptotagmin family. In terms of assembly, homodimer. Can also form heterodimers. In terms of tissue distribution, expressed in brain.

May be involved in the trafficking and exocytosis of secretory vesicles in non-neuronal tissues. Is Ca(2+)-independent. The protein is Synaptotagmin-16 (SYT16) of Homo sapiens (Human).